Here is a 300-residue protein sequence, read N- to C-terminus: Small ribosomal subunit biogenesis GTPase RsgA (300 aa).

A CP-type G domain is found at 69 to 231 (RSDEMRVKQF…LIDSPGFQAF (163 aa)). Residues 119-122 (NKID) and 172-180 (GQSGMGKST) contribute to the GTP site. Residues Cys-255, Cys-260, His-262, and Cys-268 each coordinate Zn(2+).

It belongs to the TRAFAC class YlqF/YawG GTPase family. RsgA subfamily. In terms of assembly, monomer. Associates with 30S ribosomal subunit, binds 16S rRNA. Zn(2+) is required as a cofactor.

The protein localises to the cytoplasm. Its function is as follows. One of several proteins that assist in the late maturation steps of the functional core of the 30S ribosomal subunit. Helps release RbfA from mature subunits. May play a role in the assembly of ribosomal proteins into the subunit. Circularly permuted GTPase that catalyzes slow GTP hydrolysis, GTPase activity is stimulated by the 30S ribosomal subunit. The protein is Small ribosomal subunit biogenesis GTPase RsgA of Bordetella bronchiseptica (strain ATCC BAA-588 / NCTC 13252 / RB50) (Alcaligenes bronchisepticus).